A 168-amino-acid polypeptide reads, in one-letter code: Phosphopantetheine adenylyltransferase (168 aa).

Residue Ser8 coordinates substrate. Residues 8 to 9 (SF) and His16 contribute to the ATP site. 3 residues coordinate substrate: Lys40, Thr72, and Arg86. ATP is bound by residues 87 to 89 (GLR), Glu97, and 122 to 128 (YSFLSSS).

This sequence belongs to the bacterial CoaD family. In terms of assembly, homohexamer. The cofactor is Mg(2+).

The protein localises to the cytoplasm. The catalysed reaction is (R)-4'-phosphopantetheine + ATP + H(+) = 3'-dephospho-CoA + diphosphate. The protein operates within cofactor biosynthesis; coenzyme A biosynthesis; CoA from (R)-pantothenate: step 4/5. Its function is as follows. Reversibly transfers an adenylyl group from ATP to 4'-phosphopantetheine, yielding dephospho-CoA (dPCoA) and pyrophosphate. This Thermosynechococcus vestitus (strain NIES-2133 / IAM M-273 / BP-1) protein is Phosphopantetheine adenylyltransferase.